A 614-amino-acid chain; its full sequence is DNA mismatch repair protein MutL (614 aa).

It belongs to the DNA mismatch repair MutL/HexB family.

In terms of biological role, this protein is involved in the repair of mismatches in DNA. It is required for dam-dependent methyl-directed DNA mismatch repair. May act as a 'molecular matchmaker', a protein that promotes the formation of a stable complex between two or more DNA-binding proteins in an ATP-dependent manner without itself being part of a final effector complex. This Thermoanaerobacter pseudethanolicus (strain ATCC 33223 / 39E) (Clostridium thermohydrosulfuricum) protein is DNA mismatch repair protein MutL.